The sequence spans 172 residues: Avenin-like a4 (172 aa).

The first 19 residues, 1 to 19, serve as a signal peptide directing secretion; that stretch reads MKTMFILALIALAATSVVA.

The protein belongs to the prolamin family. Contains 7 disulfide bonds.

Functionally, seed storage protein. Not integrated in the gluten polymer through disulfide bonds, unless incorporated by reduction and reoxidation during dough making. Increases dough strength and bread volume, but decreases dough stability when added into a base wheat flour. This is Avenin-like a4 from Triticum aestivum (Wheat).